A 1214-amino-acid chain; its full sequence is ATP-dependent helicase/nuclease subunit A (1214 aa).

A UvrD-like helicase ATP-binding domain is found at 27-483 (HKRTAQQIEA…ILLKENFRSQ (457 aa)). Position 48 to 55 (48 to 55 (ASAGSGKT)) interacts with ATP. The UvrD-like helicase C-terminal domain maps to 512–800 (QLVAGSEAQK…NLMTIHKSKG (289 aa)).

This sequence belongs to the helicase family. AddA subfamily. In terms of assembly, heterodimer of AddA and AddB/RexB. It depends on Mg(2+) as a cofactor.

The catalysed reaction is Couples ATP hydrolysis with the unwinding of duplex DNA by translocating in the 3'-5' direction.. It carries out the reaction ATP + H2O = ADP + phosphate + H(+). Its function is as follows. The heterodimer acts as both an ATP-dependent DNA helicase and an ATP-dependent, dual-direction single-stranded exonuclease. Recognizes the chi site generating a DNA molecule suitable for the initiation of homologous recombination. The AddA nuclease domain is required for chi fragment generation; this subunit has the helicase and 3' -&gt; 5' nuclease activities. In Streptococcus equi subsp. zooepidemicus (strain MGCS10565), this protein is ATP-dependent helicase/nuclease subunit A.